The chain runs to 150 residues: PTS system galactitol-specific EIIA component (150 aa).

Residues 1 to 144 (MTNLFVRSGI…TQLKEYFTKY (144 aa)) enclose the PTS EIIA type-2 domain. The active-site Tele-phosphohistidine intermediate is His62. His62 is modified (phosphohistidine; by HPr).

In terms of assembly, forms a complex with one each of subunit of GatA, GatB and 2 subunits of GatC.

The protein resides in the cytoplasm. Functionally, the phosphoenolpyruvate-dependent sugar phosphotransferase system (sugar PTS), a major carbohydrate active transport system, catalyzes the phosphorylation of incoming sugar substrates concomitantly with their translocation across the cell membrane. The enzyme II complex composed of GatA, GatB and GatC is involved in galactitol transport. The chain is PTS system galactitol-specific EIIA component (gatA) from Escherichia coli O157:H7.